We begin with the raw amino-acid sequence, 197 residues long: Putative eggshell protein (197 aa).

The signal sequence occupies residues M1–A17.

The protein is Putative eggshell protein of Fasciola hepatica (Liver fluke).